Here is a 344-residue protein sequence, read N- to C-terminus: MSEPIRLTQYSHGAGCGCKISPKVLDVILAESGTQALDPKLWVGNASRDDAAVYALDDERGVVSTTDFFMPIVDDPYDFGRIAATNAISDIYAMGGDPLMAIAILGWPVNVLPPEVAREVIRGGRAVCAEAGIPLAGGHSIDAPEPIFGLAVTGVVSKRHLKRNDTASAGCQLYLTKPLGIGILTTAEKKAKLRVQDQGLARDWMCTLNTPGSRFGKLDGVKAMTDVTGFGLLGHLVELAEGSGLTAHLNYAAVPRLPSVDHYLAEGCIPGGTLRNYDSYGHKISALSDDQKHLLCDPQTSGGLLVAVAPEGEAEFLAVAAELGLKLSPIGKLVERQSHAVEVI.

Residue Cys-16 is part of the active site. ATP contacts are provided by residues Lys-19 and 47-49; that span reads SRD. A Mg(2+)-binding site is contributed by Asp-50. ATP is bound by residues Asp-67, Asp-90, and 138–140; that span reads GHS. Asp-90 contacts Mg(2+). Mg(2+) is bound at residue Asp-226.

Belongs to the selenophosphate synthase 1 family. Class I subfamily. Homodimer. It depends on Mg(2+) as a cofactor.

It catalyses the reaction hydrogenselenide + ATP + H2O = selenophosphate + AMP + phosphate + 2 H(+). Its function is as follows. Synthesizes selenophosphate from selenide and ATP. This is Selenide, water dikinase from Pseudomonas putida (strain ATCC 47054 / DSM 6125 / CFBP 8728 / NCIMB 11950 / KT2440).